The primary structure comprises 180 residues: Pro-glucagon (180 aa).

Residues 1–20 form the signal peptide; it reads MKTVYIVAGLFVMLVQGSWQ. Residues 23–59 form a disordered region; that stretch reads PQDTEENARSFPASQTEPLEDPDQINEDKRHSQGTFT. Ser54 is subject to Phosphoserine. Positions 84-89 are excised as a propeptide; it reads NRNNIA. A phosphoserine mark is found at Ser105 and Ser108. An Arginine amide modification is found at Arg127. A propeptide spanning residues 131-145 is cleaved from the precursor; sequence DFPEEVAIAEELGRR. A phosphoserine mark is found at Ser150 and Ser152.

It belongs to the glucagon family. In terms of processing, proglucagon is post-translationally processed in a tissue-specific manner in pancreatic A cells and intestinal L cells. In pancreatic A cells, the major bioactive hormone is glucagon cleaved by PCSK2/PC2. In the intestinal L cells PCSK1/PC1 liberates GLP-1, GLP-2, glicentin and oxyntomodulin. GLP-1 is further N-terminally truncated by post-translational processing in the intestinal L cells resulting in GLP-1(7-37) GLP-1-(7-36)amide. The C-terminal amidation is neither important for the metabolism of GLP-1 nor for its effects on the endocrine pancreas. As to expression, glucagon is secreted in the A cells of the islets of Langerhans. GLP-1, GLP-2, oxyntomodulin and glicentin are secreted from enteroendocrine cells throughout the gastrointestinal tract.

The protein localises to the secreted. Functionally, plays a key role in glucose metabolism and homeostasis. Regulates blood glucose by increasing gluconeogenesis and decreasing glycolysis. A counterregulatory hormone of insulin, raises plasma glucose levels in response to insulin-induced hypoglycemia. Plays an important role in initiating and maintaining hyperglycemic conditions in diabetes. In terms of biological role, potent stimulator of glucose-dependent insulin release. Also stimulates insulin release in response to IL6. Plays important roles on gastric motility and the suppression of plasma glucagon levels. May be involved in the suppression of satiety and stimulation of glucose disposal in peripheral tissues, independent of the actions of insulin. Has growth-promoting activities on intestinal epithelium. May also regulate the hypothalamic pituitary axis (HPA) via effects on LH, TSH, CRH, oxytocin, and vasopressin secretion. Increases islet mass through stimulation of islet neogenesis and pancreatic beta cell proliferation. Inhibits beta cell apoptosis. Its function is as follows. Stimulates intestinal growth and up-regulates villus height in the small intestine, concomitant with increased crypt cell proliferation and decreased enterocyte apoptosis. The gastrointestinal tract, from the stomach to the colon is the principal target for GLP-2 action. Plays a key role in nutrient homeostasis, enhancing nutrient assimilation through enhanced gastrointestinal function, as well as increasing nutrient disposal. Stimulates intestinal glucose transport and decreases mucosal permeability. May modulate gastric acid secretion and the gastro-pyloro-duodenal activity. May play an important role in intestinal mucosal growth in the early period of life. Functionally, oxyntomodulin significantly reduces food intake. The chain is Pro-glucagon (Gcg) from Rattus norvegicus (Rat).